The primary structure comprises 122 residues: Large ribosomal subunit protein uL14 (122 aa).

The protein belongs to the universal ribosomal protein uL14 family. Part of the 50S ribosomal subunit. Forms a cluster with proteins L3 and L19. In the 70S ribosome, L14 and L19 interact and together make contacts with the 16S rRNA in bridges B5 and B8.

In terms of biological role, binds to 23S rRNA. Forms part of two intersubunit bridges in the 70S ribosome. The protein is Large ribosomal subunit protein uL14 of Paraburkholderia phymatum (strain DSM 17167 / CIP 108236 / LMG 21445 / STM815) (Burkholderia phymatum).